Here is a 435-residue protein sequence, read N- to C-terminus: Homoserine dehydrogenase (435 aa).

NADPH contacts are provided by Thr-13, Val-14, Arg-43, and Lys-105. Val-14 provides a ligand contact to NAD(+). NADP(+) is bound by residues Val-14, Arg-43, and Lys-105. Glu-129, Val-132, Gly-134, and Ile-136 together coordinate Na(+). Catalysis depends on Lys-204, which acts as the Proton donor. Disordered regions lie at residues 255 to 274 (ARGV…TPDR) and 377 to 402 (RCDD…PDHV). Basic and acidic residues-rich tracts occupy residues 262–274 (RAPD…TPDR) and 377–391 (RCDD…AERR).

It belongs to the homoserine dehydrogenase family. It depends on a metal cation as a cofactor.

The catalysed reaction is L-homoserine + NADP(+) = L-aspartate 4-semialdehyde + NADPH + H(+). The enzyme catalyses L-homoserine + NAD(+) = L-aspartate 4-semialdehyde + NADH + H(+). It participates in amino-acid biosynthesis; L-methionine biosynthesis via de novo pathway; L-homoserine from L-aspartate: step 3/3. It functions in the pathway amino-acid biosynthesis; L-threonine biosynthesis; L-threonine from L-aspartate: step 3/5. Catalyzes the conversion of L-aspartate-beta-semialdehyde (L-Asa) to L-homoserine (L-Hse), the third step in the biosynthesis of threonine and methionine from aspartate. In Methylobacillus glycogenes, this protein is Homoserine dehydrogenase (hom).